Reading from the N-terminus, the 165-residue chain is Putative 4-hydroxy-4-methyl-2-oxoglutarate aldolase (165 aa).

Residues 80–83 and R102 contribute to the substrate site; that span reads GGNL. Residue D103 participates in a divalent metal cation binding.

It belongs to the class II aldolase/RraA-like family. In terms of assembly, homotrimer. Requires a divalent metal cation as cofactor.

The catalysed reaction is 4-hydroxy-4-methyl-2-oxoglutarate = 2 pyruvate. It catalyses the reaction oxaloacetate + H(+) = pyruvate + CO2. Catalyzes the aldol cleavage of 4-hydroxy-4-methyl-2-oxoglutarate (HMG) into 2 molecules of pyruvate. Also contains a secondary oxaloacetate (OAA) decarboxylase activity due to the common pyruvate enolate transition state formed following C-C bond cleavage in the retro-aldol and decarboxylation reactions. The sequence is that of Putative 4-hydroxy-4-methyl-2-oxoglutarate aldolase from Burkholderia mallei (strain NCTC 10247).